The chain runs to 1560 residues: Lysine-specific demethylase 5C (1560 aa).

Residues 14–55 (CPVFEPSWAEFRDPLGYIAKIRPIAEKSGICKIRPPADWQPP) form the JmjN domain. The region spanning 79 to 169 (TRVKLNYLDQ…IVYPYEMYQS (91 aa)) is the ARID domain. The segment covering 197-207 (LRQSVQPSKFN) has biased composition (polar residues). Positions 197–227 (LRQSVQPSKFNSYGRRAKRLQPDPEPTEEDI) are disordered. Glycyl lysine isopeptide (Lys-Gly) (interchain with G-Cter in SUMO2) cross-links involve residues Lys205, Lys229, Lys244, and Lys274. Position 287 is a phosphoserine (Ser287). A Glycyl lysine isopeptide (Lys-Gly) (interchain with G-Cter in SUMO2) cross-link involves residue Lys295. A phosphoserine mark is found at Ser301 and Ser317. The PHD-type 1 zinc-finger motif lies at 326 to 372 (VCRMCSRGDEDDKLLLCDGCDDNYHIFCLLPPLPEIPKGVWRCPKCV). A 2-oxoglutarate-binding site is contributed by Tyr440. Residues 468–634 (EYATSGWNLN…AGRQCIEHYR (167 aa)) enclose the JmjC domain. Fe cation-binding residues include His514 and Glu516. 2-oxoglutarate is bound by residues Ser522, Asn524, and Lys532. Fe cation is bound at residue His602. A C5HC2 zinc finger spans residues 707–759 (CIKCKTTCFLSALACYDCPDGLVCLSHINDLCKCSSSRQYLRYRYTLDELPAM). Ser893 and Ser897 each carry phosphoserine. Residue Lys1127 forms a Glycyl lysine isopeptide (Lys-Gly) (interchain with G-Cter in SUMO2) linkage. The disordered stretch occupies residues 1161 to 1181 (ILQLRRTNSAKPSPLASSSTA). Over residues 1169–1181 (SAKPSPLASSSTA) the composition is skewed to low complexity. A PHD-type 2 zinc finger spans residues 1187–1248 (ICVCGQVLAG…DTKFLCPLCM (62 aa)). Disordered regions lie at residues 1316–1371 (QAEP…GSGK) and 1444–1560 (ERHG…QQQL). Positions 1335-1345 (PLREGSGKDMP) are enriched in basic and acidic residues. Ser1359 is subject to Phosphoserine. Over residues 1448 to 1463 (SRARGRALERRRRRKV) the composition is skewed to basic residues. Basic and acidic residues predominate over residues 1464-1481 (DRGGEGDDPAREELEPKR). Residues 1488–1503 (EAEEVQEEEELEEETG) show a composition bias toward acidic residues. A compositionally biased stretch (polar residues) spans 1516–1544 (SPSTQENQNGLEPAEGTTSGPSAPFSTLT).

It belongs to the JARID1 histone demethylase family. In terms of assembly, part of two distinct complexes, one containing E2F6, and the other containing REST. Interacts with ZMYND8. Requires Fe(2+) as cofactor. In terms of tissue distribution, expressed in all tissues examined. Highest levels found in brain and skeletal muscle.

The protein localises to the nucleus. The enzyme catalyses N(6),N(6),N(6)-trimethyl-L-lysyl(4)-[histone H3] + 3 2-oxoglutarate + 3 O2 = L-lysyl(4)-[histone H3] + 3 formaldehyde + 3 succinate + 3 CO2. The inhibitor KDOAM-25 and others inhibit its demethylase activity, resulting to cell cycle arrest in myeloma cells. In terms of biological role, histone demethylase that specifically demethylates 'Lys-4' of histone H3, thereby playing a central role in histone code. Does not demethylate histone H3 'Lys-9', H3 'Lys-27', H3 'Lys-36', H3 'Lys-79' or H4 'Lys-20'. Demethylates trimethylated and dimethylated but not monomethylated H3 'Lys-4'. Participates in transcriptional repression of neuronal genes by recruiting histone deacetylases and REST at neuron-restrictive silencer elements. Represses the CLOCK-BMAL1 heterodimer-mediated transcriptional activation of the core clock component PER2. The protein is Lysine-specific demethylase 5C of Homo sapiens (Human).